The primary structure comprises 80 residues: Metallothionein-like protein 2B (80 aa).

Belongs to the metallothionein superfamily. Type 15 family. As to expression, highly expressed in stems. Expressed in leaves and rachis.

Functionally, metallothioneins have a high content of cysteine residues that bind various heavy metals. The protein is Metallothionein-like protein 2B (MT2B) of Oryza sativa subsp. japonica (Rice).